We begin with the raw amino-acid sequence, 230 residues long: Claudin-2 (230 aa).

Residues 1-7 (MASLGLQ) are Cytoplasmic-facing. A helical membrane pass occupies residues 8 to 28 (LVGYILGLLGLLGTLVAMLLP). Topologically, residues 29 to 81 (SWKTSSYVGASIVTAVGFSKGLWMECATHSTGITQCDIYSTLLGLPADIQAAQ) are extracellular. A disulfide bridge links Cys54 with Cys64. The helical transmembrane segment at 82–102 (AMMVTSSAISSLACIISVVGM) threads the bilayer. The Cytoplasmic segment spans residues 103–116 (RCTVFCQESRAKDR). A helical membrane pass occupies residues 117–137 (VAVAGGVFFILGGLLGFIPVA). Topologically, residues 138-162 (WNLHGILRDFYSPLVPDSMKFEIGE) are extracellular. The chain crosses the membrane as a helical span at residues 163 to 183 (ALYLGIISSLFSLIAGIILCF). At 184 to 230 (SCSSQRNRSNYYDAYQAQPLATRSSPRPGQPPKVKSEFNSYSLTGYV) the chain is on the cytoplasmic side. The segment at 205-230 (TRSSPRPGQPPKVKSEFNSYSLTGYV) is disordered. A Glycyl lysine isopeptide (Lys-Gly) (interchain with G-Cter in SUMO) cross-link involves residue Lys218. Phosphoserine occurs at positions 219 and 223. Polar residues predominate over residues 220-230 (EFNSYSLTGYV). The interval 229–230 (YV) is interactions with TJP1, TJP2 and TJP3.

The protein belongs to the claudin family. In terms of assembly, can form homo- and heteropolymers with other claudins to mediate paracellular barrier and channel functions of tight junctions in response to physiological stimuli. Homopolymers interact with CLDN3, but not CLDN1, homopolymers. Directly interacts with TJP1/ZO-1, TJP2/ZO-2 and TJP3/ZO-3. Post-translationally, the disulfide bond is necessary for pore formation, but is not required for correct protein trafficking.

It localises to the cell junction. Its subcellular location is the tight junction. It is found in the cell membrane. The catalysed reaction is Na(+)(in) = Na(+)(out). It catalyses the reaction K(+)(in) = K(+)(out). It carries out the reaction Rb(+)(in) = Rb(+)(out). The enzyme catalyses Li(+)(in) = Li(+)(out). The catalysed reaction is Cs(+)(in) = Cs(+)(out). It catalyses the reaction Ca(2+)(in) = Ca(2+)(out). It carries out the reaction methylamine(out) = methylamine(in). The enzyme catalyses choline(out) = choline(in). The catalysed reaction is H2O(in) = H2O(out). In terms of biological role, forms paracellular channels: polymerizes in tight junction strands with cation- and water-selective channels through the strands, conveying epithelial permeability in a process known as paracellular tight junction permeability. In intestinal epithelium, allows for sodium and water fluxes from the peritoneal side to the lumen of the intestine to regulate nutrient absorption and clear enteric pathogens as part of mucosal immune response. In kidney, allows passive sodium and calcium reabsorption across proximal tubules from the lumen back to the bloodstream. In the hepatobiliary tract, allows paracellular water and cation fluxes in the hepatic perivenous areas and biliary epithelium to generate bile flow and maintain osmotic gradients. The protein is Claudin-2 of Homo sapiens (Human).